A 189-amino-acid polypeptide reads, in one-letter code: Putative manganese efflux pump MntP (189 aa).

6 helical membrane passes run 3–23 (PVAT…AAIG), 41–61 (LIFG…GKAA), 62–82 (AQYV…VLGA), 104–124 (FWLL…VGAG), 132–152 (IYST…IGVM), and 168–188 (AGGI…LNIF).

This sequence belongs to the MntP (TC 9.B.29) family.

It localises to the cell inner membrane. Probably functions as a manganese efflux pump. This Paraburkholderia phytofirmans (strain DSM 17436 / LMG 22146 / PsJN) (Burkholderia phytofirmans) protein is Putative manganese efflux pump MntP.